Consider the following 363-residue polypeptide: MRVDLFDFDLPEERIALRPVEPRDHAKLLHVRPGEPFEDRHVYDLFDLLQPGDALVFNDTKVIPAQLEGMRERTGNISQVSATLHMRVGPDRWKAFLRPAKRVKEGDRIRFGHSGTSCFLGTLDATVAEKGDSGEALLVFDLSGAVLDEAIAAVGHIPLPPYIASKRPEDERDRKDYQTVYAREEGAVAAPTAGLHFTPDLLEKIKARGIEEHFVTLHVGAGTFLPVKADDTGDHKMHAEIGHVSQRTASALNAVHERGGRIICVGTTSLRLIESATGEDGVVRPWSGATDIFITPGYRFRAVDLLMTNFHLPRSTLFMLVSAFSGLDTMHAAYNYAIADGYRFYSYGDASLLERIDHDRHSA.

The protein belongs to the QueA family. Monomer.

The protein localises to the cytoplasm. It catalyses the reaction 7-aminomethyl-7-carbaguanosine(34) in tRNA + S-adenosyl-L-methionine = epoxyqueuosine(34) in tRNA + adenine + L-methionine + 2 H(+). It participates in tRNA modification; tRNA-queuosine biosynthesis. Its function is as follows. Transfers and isomerizes the ribose moiety from AdoMet to the 7-aminomethyl group of 7-deazaguanine (preQ1-tRNA) to give epoxyqueuosine (oQ-tRNA). The sequence is that of S-adenosylmethionine:tRNA ribosyltransferase-isomerase from Brucella melitensis biotype 2 (strain ATCC 23457).